A 254-amino-acid chain; its full sequence is Hydroxyacylglutathione hydrolase (254 aa).

Zn(2+) is bound by residues histidine 53, histidine 55, aspartate 57, histidine 58, histidine 111, aspartate 128, and histidine 166.

This sequence belongs to the metallo-beta-lactamase superfamily. Glyoxalase II family. In terms of assembly, monomer. The cofactor is Zn(2+).

It carries out the reaction an S-(2-hydroxyacyl)glutathione + H2O = a 2-hydroxy carboxylate + glutathione + H(+). It participates in secondary metabolite metabolism; methylglyoxal degradation; (R)-lactate from methylglyoxal: step 2/2. Functionally, thiolesterase that catalyzes the hydrolysis of S-D-lactoyl-glutathione to form glutathione and D-lactic acid. In Aeromonas hydrophila subsp. hydrophila (strain ATCC 7966 / DSM 30187 / BCRC 13018 / CCUG 14551 / JCM 1027 / KCTC 2358 / NCIMB 9240 / NCTC 8049), this protein is Hydroxyacylglutathione hydrolase.